A 94-amino-acid chain; its full sequence is Small ribosomal subunit protein bS18 (94 aa).

Residues 1–12 (MSEQNSRPQNSE) are compositionally biased toward low complexity. The disordered stretch occupies residues 1 to 29 (MSEQNSRPQNSERPQRSRRPQGGPRRRRK). Positions 16–29 (RSRRPQGGPRRRRK) are enriched in basic residues.

Belongs to the bacterial ribosomal protein bS18 family. Part of the 30S ribosomal subunit. Forms a tight heterodimer with protein bS6.

Functionally, binds as a heterodimer with protein bS6 to the central domain of the 16S rRNA, where it helps stabilize the platform of the 30S subunit. The protein is Small ribosomal subunit protein bS18 of Leuconostoc mesenteroides subsp. mesenteroides (strain ATCC 8293 / DSM 20343 / BCRC 11652 / CCM 1803 / JCM 6124 / NCDO 523 / NBRC 100496 / NCIMB 8023 / NCTC 12954 / NRRL B-1118 / 37Y).